We begin with the raw amino-acid sequence, 418 residues long: Probable serine hydroxymethyltransferase (418 aa).

(6S)-5,6,7,8-tetrahydrofolate is bound by residues L118 and 122–124 (GHL). K226 carries the post-translational modification N6-(pyridoxal phosphate)lysine. 351 to 353 (SPF) serves as a coordination point for (6S)-5,6,7,8-tetrahydrofolate.

Belongs to the SHMT family. As to quaternary structure, homodimer. Requires pyridoxal 5'-phosphate as cofactor.

It is found in the cytoplasm. The enzyme catalyses (6R)-5,10-methylene-5,6,7,8-tetrahydrofolate + glycine + H2O = (6S)-5,6,7,8-tetrahydrofolate + L-serine. It functions in the pathway one-carbon metabolism; tetrahydrofolate interconversion. Functionally, catalyzes the reversible interconversion of serine and glycine with tetrahydrofolate (THF) serving as the one-carbon carrier. This reaction serves as the major source of one-carbon groups required for the biosynthesis of purines, thymidylate, methionine, and other important biomolecules. The protein is Probable serine hydroxymethyltransferase of Mesomycoplasma hyopneumoniae (strain 7448) (Mycoplasma hyopneumoniae).